Reading from the N-terminus, the 261-residue chain is Undecaprenyl-diphosphatase (261 aa).

8 helical membrane passes run 9 to 31 (ALLL…GHLT), 46 to 66 (FLKT…LLLY), 80 to 100 (IAVA…LIKG), 102 to 122 (ILGN…VLLF), 137 to 157 (ALPL…ALFP), 180 to 200 (AEFS…YDLW), 209 to 229 (GGWS…LVTV), and 240 to 260 (GFRP…FFFL).

It belongs to the UppP family.

It is found in the cell inner membrane. It carries out the reaction di-trans,octa-cis-undecaprenyl diphosphate + H2O = di-trans,octa-cis-undecaprenyl phosphate + phosphate + H(+). Catalyzes the dephosphorylation of undecaprenyl diphosphate (UPP). Confers resistance to bacitracin. The polypeptide is Undecaprenyl-diphosphatase (Thermus thermophilus (strain ATCC 27634 / DSM 579 / HB8)).